A 276-amino-acid chain; its full sequence is ARL14 effector protein (276 aa).

The disordered stretch occupies residues 159-183 (QTEFAPESGKREKRKLTKNASASSD). Lysine 176 is covalently cross-linked (Glycyl lysine isopeptide (Lys-Gly) (interchain with G-Cter in SUMO2)). 2 positions are modified to phosphoserine: serine 182 and serine 266.

Interacts with ARL14 and MYO1E.

The protein localises to the cytoplasm. In terms of biological role, through its interaction with ARL14 and MYO1E, may connect MHC class II-containing cytoplasmic vesicles to the actin network and hence controls the movement of these vesicles along the actin cytoskeleton in dendritic cells. This chain is ARL14 effector protein (Arl14ep), found in Rattus norvegicus (Rat).